Reading from the N-terminus, the 910-residue chain is p53-induced death domain-containing protein 1 (910 aa).

A disordered region spans residues 1 to 25 (MAATVEGPELEAAAAAGDASEDSDA). Position 2 is an N-acetylalanine (A2). 7 LRR repeats span residues 126–147 (HLAH…VLQM), 149–171 (GLGA…GALP), 172–194 (ALTF…GALS), 195–216 (TLQR…IGGL), 218–240 (SLLE…AGLR), 241–263 (SLRL…ARLP), and 264–285 (LLTR…LLDA). S299 and S305 each carry phosphoserine. ZU5 domains are found at residues 322–454 (DLDS…VSRP) and 455–596 (VSNA…WYTT). 2 peptidase S68 regions span residues 423 to 452 (DLET…LVVS) and 566 to 594 (DITA…WLWY). Residues H444, S446, H586, and S588 contribute to the active site. The interval 580-716 (ARFQVTHFSW…TTTLDREAQA (137 aa)) is UPA domain. A Death domain is found at 788-873 (TQSNLLSVAG…DVAEEVRAVL (86 aa)). A disordered region spans residues 884–910 (IRRMGLAPKDPALPGSSAPQPPEPAQA).

Forms a complex named the PIDDosome with CASP2 and CRADD. Forms a complex with IKBKG and RIPK1. Interacts with FADD and MADD. Undergoes autoproteolytic processing whose extent either directs cells towards survival or apoptotic pathways. Autoproteolytically cleaved into two main fragments PIDD-N and PIDD-C. PIDD-C can be further processed into PIDD-CC, a processing which is enhanced by DNA damage. The cleavage producing PIDD-C is required for translocation of PIDD1 to the nucleus upon DNA damage and activation of NF-kappa-B. PIDD-CC mediates the interaction with CRADD and the cleavage producing PIDD-CC is required for the activation of CASP2. PIDD-N remains associated with PIDD-C and PIDD-CC after cleavage. As to expression, ubiquitous.

Its subcellular location is the cytoplasm. The protein localises to the nucleus. Component of the DNA damage/stress response pathway that functions downstream of p53/TP53 and can either promote cell survival or apoptosis. Associated with CRADD and the CASP2 caspase, it forms the PIDDosome a complex that activates CASP2 and triggers apoptosis. Associated with IKBKG and RIPK1, it enhances sumoylation and ubiquitination of IKBKG which is important for activation of the transcription factor NF-kappa-B. This Homo sapiens (Human) protein is p53-induced death domain-containing protein 1.